A 406-amino-acid chain; its full sequence is Peptidase T (406 aa).

Residue histidine 77 coordinates Zn(2+). Aspartate 79 is a catalytic residue. Position 139 (aspartate 139) interacts with Zn(2+). Glutamate 173 functions as the Proton acceptor in the catalytic mechanism. Glutamate 174, aspartate 196, and histidine 377 together coordinate Zn(2+).

The protein belongs to the peptidase M20B family. Requires Zn(2+) as cofactor.

It is found in the cytoplasm. It catalyses the reaction Release of the N-terminal residue from a tripeptide.. Cleaves the N-terminal amino acid of tripeptides. This is Peptidase T from Parabacteroides distasonis (strain ATCC 8503 / DSM 20701 / CIP 104284 / JCM 5825 / NCTC 11152).